The sequence spans 345 residues: Tyrosine--tRNA ligase (345 aa).

An L-tyrosine-binding site is contributed by Y36. Residues 41–49 (PTGEMHIGH) carry the 'HIGH' region motif. The L-tyrosine site is built by Y163, Q167, D170, and Q185.

The protein belongs to the class-I aminoacyl-tRNA synthetase family. TyrS type 3 subfamily. In terms of assembly, homodimer.

Its subcellular location is the cytoplasm. It catalyses the reaction tRNA(Tyr) + L-tyrosine + ATP = L-tyrosyl-tRNA(Tyr) + AMP + diphosphate + H(+). Its function is as follows. Catalyzes the attachment of tyrosine to tRNA(Tyr) in a two-step reaction: tyrosine is first activated by ATP to form Tyr-AMP and then transferred to the acceptor end of tRNA(Tyr). The sequence is that of Tyrosine--tRNA ligase from Natronomonas pharaonis (strain ATCC 35678 / DSM 2160 / CIP 103997 / JCM 8858 / NBRC 14720 / NCIMB 2260 / Gabara) (Halobacterium pharaonis).